We begin with the raw amino-acid sequence, 264 residues long: uncharacterized protein (264 aa).

A run of 4 helical transmembrane segments spans residues 43–63, 68–88, 96–116, and 150–170; these read VVAA…LYLI, FLPS…LLGI, ILPA…LGCI, and LAAK…VLAV. Residues 216–247 are disordered; sequence SYEDALKNSSQQPSTSSSSSSPPSRPPHSVYT. The span at 224–237 shows a compositional bias: low complexity; it reads SSQQPSTSSSSSSP.

It is found in the membrane. This is an uncharacterized protein from Caenorhabditis elegans.